The sequence spans 111 residues: Non-virion protein (111 aa).

The protein belongs to the novirhabdovirus NV protein family.

Functionally, plays an essential role for the viral pathogenicity. This chain is Non-virion protein (NV), found in Acanthopagrus schlegelii (Black porgy).